A 354-amino-acid chain; its full sequence is Dihydroorotate dehydrogenase (quinone) (354 aa).

FMN-binding positions include 67–71 (AGFDK) and Thr-91. Lys-71 is a substrate binding site. 116–120 (NRMGF) is a binding site for substrate. FMN is bound by residues Asn-144 and Asn-177. Asn-177 provides a ligand contact to substrate. The active-site Nucleophile is Ser-180. Asn-182 is a binding site for substrate. Residues Lys-213 and Thr-241 each coordinate FMN. A substrate-binding site is contributed by 242 to 243 (NT). Residues Gly-265, Gly-294, and 315-316 (YT) contribute to the FMN site.

Belongs to the dihydroorotate dehydrogenase family. Type 2 subfamily. In terms of assembly, monomer. FMN serves as cofactor.

It is found in the cell membrane. The catalysed reaction is (S)-dihydroorotate + a quinone = orotate + a quinol. Its pathway is pyrimidine metabolism; UMP biosynthesis via de novo pathway; orotate from (S)-dihydroorotate (quinone route): step 1/1. Its function is as follows. Catalyzes the conversion of dihydroorotate to orotate with quinone as electron acceptor. The protein is Dihydroorotate dehydrogenase (quinone) of Mycolicibacterium smegmatis (strain ATCC 700084 / mc(2)155) (Mycobacterium smegmatis).